The primary structure comprises 117 residues: UPF0375 protein Y45F10C.2 (117 aa).

A signal peptide spans 1–20; the sequence is MNSFVSTVLLLSVTIALVSG.

The protein belongs to the UPF0375 family. As to expression, expressed in the uterine epithelium.

The protein resides in the secreted. Its function is as follows. Negatively regulates the egg-laying rate by promoting retention of fertilized eggs. This is UPF0375 protein Y45F10C.2 from Caenorhabditis elegans.